A 699-amino-acid chain; its full sequence is DNA ligase (699 aa).

The interval 1–20 (MTVQKPIESLSPAQAKREHR) is disordered. Residues 43–47 (DAEYD), 92–93 (SL), and E126 each bind NAD(+). The N6-AMP-lysine intermediate role is filled by K128. 4 residues coordinate NAD(+): R149, E185, K301, and K325. Zn(2+) contacts are provided by C419, C422, C443, and C449. The BRCT domain occupies 621 to 699 (AKESPVAGKT…EEDWLKLVGE (79 aa)).

This sequence belongs to the NAD-dependent DNA ligase family. LigA subfamily. Mg(2+) is required as a cofactor. Requires Mn(2+) as cofactor.

It carries out the reaction NAD(+) + (deoxyribonucleotide)n-3'-hydroxyl + 5'-phospho-(deoxyribonucleotide)m = (deoxyribonucleotide)n+m + AMP + beta-nicotinamide D-nucleotide.. Its function is as follows. DNA ligase that catalyzes the formation of phosphodiester linkages between 5'-phosphoryl and 3'-hydroxyl groups in double-stranded DNA using NAD as a coenzyme and as the energy source for the reaction. It is essential for DNA replication and repair of damaged DNA. This Beijerinckia indica subsp. indica (strain ATCC 9039 / DSM 1715 / NCIMB 8712) protein is DNA ligase.